Reading from the N-terminus, the 338-residue chain is Probable protein S-acyltransferase 1 (338 aa).

Transmembrane regions (helical) follow at residues 32–52 and 68–88; these read DASS…AFSI and LTLI…FLTS. The region spanning 142–192 is the DHHC domain; the sequence is KFCDTCQLYRPPRAFHCSICNNCVQRFDHHCPWVGQCIALRNYPFFVCFLS. Catalysis depends on Cys172, which acts as the S-palmitoyl cysteine intermediate. 2 consecutive transmembrane segments (helical) span residues 186–206 and 225–245; these read FFVC…VFSW and ILGV…GLTV. A disordered region spans residues 319–338; sequence FGPKDTKMSSGKSDSEARER. The segment covering 320 to 338 has biased composition (basic and acidic residues); it reads GPKDTKMSSGKSDSEARER.

Belongs to the DHHC palmitoyltransferase family.

Its subcellular location is the endosome membrane. The enzyme catalyses L-cysteinyl-[protein] + hexadecanoyl-CoA = S-hexadecanoyl-L-cysteinyl-[protein] + CoA. Functionally, palmitoyl acyltransferase. This Arabidopsis thaliana (Mouse-ear cress) protein is Probable protein S-acyltransferase 1 (PAT01).